We begin with the raw amino-acid sequence, 453 residues long: MQLSNSLRSARSAAASSGCALASRPVVACRRVTPSVTRPGPFTIATGPLLPASRSKAGGGIRVFSSALYEFGQQLKEDLDHDLSRARVDAIANKTRIAELEQQRRILMAVGGMADDEPELKAALMQLEEILGVSFNELQLMLAETLADHPAKMDNLAAMAAVVGTGSDGGGDESGDRDTADAADADGDGGERAWLRFKADVHACLADLRNRKDGITLHRAIVKDMVRASSNPGARRSSSSVDKMARQELDRLMPFLLDDFLDKMPGLKAAFTGKAEPGAEGDDGEGEEEGEAQDVGEDAVDSSSSGGGGGVLSCAAWQQVLGRTVRAVSPTLALVLARGYLAMAPRQYRALALVRMILPGKTGGGVDGALTRKEGLSLLKKLRPGISGLADKDKQWLEWVIARLAAEFAVQSAGDGHEPEPKRPELPPTAVQRKPPAEEQHKPTAGARDSPNM.

A signal peptide spans 1–28 (MQLSNSLRSARSAAASSGCALASRPVVA). Disordered regions lie at residues 167 to 187 (SDGGGDESGDRDTADAADADG), 272 to 307 (TGKAEPGAEGDDGEGEEEGEAQDVGEDAVDSSSSGG), and 412 to 453 (SAGD…SPNM). Residues 279–300 (AEGDDGEGEEEGEAQDVGEDAV) are compositionally biased toward acidic residues. Positions 415–425 (DGHEPEPKRPE) are enriched in basic and acidic residues.

The polypeptide is Ezy-1 protein (Ezy-1) (Chlamydomonas reinhardtii (Chlamydomonas smithii)).